Here is a 489-residue protein sequence, read N- to C-terminus: Glutamyl-tRNA(Gln) amidotransferase subunit A (489 aa).

Residues Lys78 and Ser153 each act as charge relay system in the active site. Ser177 functions as the Acyl-ester intermediate in the catalytic mechanism.

This sequence belongs to the amidase family. GatA subfamily. As to quaternary structure, heterotrimer of A, B and C subunits.

The enzyme catalyses L-glutamyl-tRNA(Gln) + L-glutamine + ATP + H2O = L-glutaminyl-tRNA(Gln) + L-glutamate + ADP + phosphate + H(+). Its function is as follows. Allows the formation of correctly charged Gln-tRNA(Gln) through the transamidation of misacylated Glu-tRNA(Gln) in organisms which lack glutaminyl-tRNA synthetase. The reaction takes place in the presence of glutamine and ATP through an activated gamma-phospho-Glu-tRNA(Gln). This is Glutamyl-tRNA(Gln) amidotransferase subunit A from Nitratidesulfovibrio vulgaris (strain DP4) (Desulfovibrio vulgaris).